Reading from the N-terminus, the 610-residue chain is Elongation factor 4 (610 aa).

A tr-type G domain is found at E11–S193. Residues D23–T28 and N140–D143 each bind GTP.

Belongs to the TRAFAC class translation factor GTPase superfamily. Classic translation factor GTPase family. LepA subfamily.

The protein localises to the cell membrane. The enzyme catalyses GTP + H2O = GDP + phosphate + H(+). Functionally, required for accurate and efficient protein synthesis under certain stress conditions. May act as a fidelity factor of the translation reaction, by catalyzing a one-codon backward translocation of tRNAs on improperly translocated ribosomes. Back-translocation proceeds from a post-translocation (POST) complex to a pre-translocation (PRE) complex, thus giving elongation factor G a second chance to translocate the tRNAs correctly. Binds to ribosomes in a GTP-dependent manner. This Streptococcus uberis (strain ATCC BAA-854 / 0140J) protein is Elongation factor 4.